Here is a 508-residue protein sequence, read N- to C-terminus: Photosystem II CP47 reaction center protein (508 aa).

A run of 6 helical transmembrane segments spans residues 21-36, 101-115, 140-156, 203-218, 237-252, and 457-472; these read SVHL…WAGS, IVLS…IWHW, GIHL…FGAF, IAAG…FHLT, VLSS…AFVV, and CFAL…HGAR.

Belongs to the PsbB/PsbC family. PsbB subfamily. In terms of assembly, PSII is composed of 1 copy each of membrane proteins PsbA, PsbB, PsbC, PsbD, PsbE, PsbF, PsbH, PsbI, PsbJ, PsbK, PsbL, PsbM, PsbT, PsbX, PsbY, PsbZ, Psb30/Ycf12, at least 3 peripheral proteins of the oxygen-evolving complex and a large number of cofactors. It forms dimeric complexes. It depends on Binds multiple chlorophylls. PSII binds additional chlorophylls, carotenoids and specific lipids. as a cofactor.

Its subcellular location is the plastid. It is found in the chloroplast thylakoid membrane. Functionally, one of the components of the core complex of photosystem II (PSII). It binds chlorophyll and helps catalyze the primary light-induced photochemical processes of PSII. PSII is a light-driven water:plastoquinone oxidoreductase, using light energy to abstract electrons from H(2)O, generating O(2) and a proton gradient subsequently used for ATP formation. This is Photosystem II CP47 reaction center protein from Chlorokybus atmophyticus (Soil alga).